A 503-amino-acid chain; its full sequence is Probable cytosol aminopeptidase (503 aa).

The Mn(2+) site is built by Lys270 and Asp275. Lys282 is a catalytic residue. 3 residues coordinate Mn(2+): Asp293, Asp352, and Glu354. Arg356 is a catalytic residue.

The protein belongs to the peptidase M17 family. Mn(2+) is required as a cofactor.

Its subcellular location is the cytoplasm. The enzyme catalyses Release of an N-terminal amino acid, Xaa-|-Yaa-, in which Xaa is preferably Leu, but may be other amino acids including Pro although not Arg or Lys, and Yaa may be Pro. Amino acid amides and methyl esters are also readily hydrolyzed, but rates on arylamides are exceedingly low.. It carries out the reaction Release of an N-terminal amino acid, preferentially leucine, but not glutamic or aspartic acids.. Presumably involved in the processing and regular turnover of intracellular proteins. Catalyzes the removal of unsubstituted N-terminal amino acids from various peptides. The protein is Probable cytosol aminopeptidase of Salmonella arizonae (strain ATCC BAA-731 / CDC346-86 / RSK2980).